We begin with the raw amino-acid sequence, 131 residues long: Ribosome-binding factor A (131 aa).

It belongs to the RbfA family. In terms of assembly, monomer. Binds 30S ribosomal subunits, but not 50S ribosomal subunits or 70S ribosomes.

It is found in the cytoplasm. Functionally, one of several proteins that assist in the late maturation steps of the functional core of the 30S ribosomal subunit. Associates with free 30S ribosomal subunits (but not with 30S subunits that are part of 70S ribosomes or polysomes). Required for efficient processing of 16S rRNA. May interact with the 5'-terminal helix region of 16S rRNA. The polypeptide is Ribosome-binding factor A (Gloeothece citriformis (strain PCC 7424) (Cyanothece sp. (strain PCC 7424))).